A 257-amino-acid chain; its full sequence is Deoxyribose-phosphate aldolase (257 aa).

D102 functions as the Proton donor/acceptor in the catalytic mechanism. The Schiff-base intermediate with acetaldehyde role is filled by K166. K198 functions as the Proton donor/acceptor in the catalytic mechanism.

The protein belongs to the DeoC/FbaB aldolase family. DeoC type 2 subfamily.

The protein resides in the cytoplasm. The enzyme catalyses 2-deoxy-D-ribose 5-phosphate = D-glyceraldehyde 3-phosphate + acetaldehyde. Its pathway is carbohydrate degradation; 2-deoxy-D-ribose 1-phosphate degradation; D-glyceraldehyde 3-phosphate and acetaldehyde from 2-deoxy-alpha-D-ribose 1-phosphate: step 2/2. In terms of biological role, catalyzes a reversible aldol reaction between acetaldehyde and D-glyceraldehyde 3-phosphate to generate 2-deoxy-D-ribose 5-phosphate. The protein is Deoxyribose-phosphate aldolase of Shewanella piezotolerans (strain WP3 / JCM 13877).